Consider the following 295-residue polypeptide: Fatty acyl-CoA reductase (295 aa).

21–28 (TGASSGIG) contacts NADP(+). Ser153 lines the substrate pocket. Residue Tyr166 is the Proton acceptor of the active site.

The protein belongs to the short-chain dehydrogenases/reductases (SDR) family.

The enzyme catalyses hexadecanal + NADP(+) + CoA = hexadecanoyl-CoA + NADPH + H(+). Functionally, catalyzes the NADPH-dependent reduction of long chain acyl-CoA (with chain lengths of 14 to 22 carbons) to the corresponding aldehyde. The sequence is that of Fatty acyl-CoA reductase (acr1) from Acinetobacter baylyi (strain ATCC 33305 / BD413 / ADP1).